We begin with the raw amino-acid sequence, 419 residues long: DNA polymerase IV (419 aa).

In terms of domain architecture, UmuC spans 12-193 (IFHIDMNCFY…MSVEEMYGIG (182 aa)). Residues D16 and D112 each coordinate Mg(2+). E113 is a catalytic residue. Positions 388–419 (IITSQKNKNESQENQQPRTSFQKDFLDDYKKP) are disordered.

It belongs to the DNA polymerase type-Y family. Monomer. Mg(2+) serves as cofactor.

It is found in the cytoplasm. The enzyme catalyses DNA(n) + a 2'-deoxyribonucleoside 5'-triphosphate = DNA(n+1) + diphosphate. Poorly processive, error-prone DNA polymerase involved in untargeted mutagenesis. Copies undamaged DNA at stalled replication forks, which arise in vivo from mismatched or misaligned primer ends. These misaligned primers can be extended by PolIV. Exhibits no 3'-5' exonuclease (proofreading) activity. May be involved in translesional synthesis, in conjunction with the beta clamp from PolIII. In Oceanobacillus iheyensis (strain DSM 14371 / CIP 107618 / JCM 11309 / KCTC 3954 / HTE831), this protein is DNA polymerase IV.